Consider the following 444-residue polypeptide: Tubulin beta-7 chain (444 aa).

The GTP site is built by Q11, E69, S138, G142, T143, G144, N204, and N226. E69 contributes to the Mg(2+) binding site.

Belongs to the tubulin family. As to quaternary structure, dimer of alpha and beta chains. A typical microtubule is a hollow water-filled tube with an outer diameter of 25 nm and an inner diameter of 15 nM. Alpha-beta heterodimers associate head-to-tail to form protofilaments running lengthwise along the microtubule wall with the beta-tubulin subunit facing the microtubule plus end conferring a structural polarity. Microtubules usually have 13 protofilaments but different protofilament numbers can be found in some organisms and specialized cells. Requires Mg(2+) as cofactor.

The protein localises to the cytoplasm. It is found in the cytoskeleton. Functionally, tubulin is the major constituent of microtubules, a cylinder consisting of laterally associated linear protofilaments composed of alpha- and beta-tubulin heterodimers. Microtubules grow by the addition of GTP-tubulin dimers to the microtubule end, where a stabilizing cap forms. Below the cap, tubulin dimers are in GDP-bound state, owing to GTPase activity of alpha-tubulin. In Gossypium hirsutum (Upland cotton), this protein is Tubulin beta-7 chain.